A 562-amino-acid polypeptide reads, in one-letter code: NAD-dependent malic enzyme (562 aa).

Tyrosine 101 serves as the catalytic Proton donor. Position 154 (arginine 154) interacts with NAD(+). Catalysis depends on lysine 172, which acts as the Proton acceptor. Residues glutamate 243, aspartate 244, and aspartate 267 each coordinate a divalent metal cation. NAD(+) contacts are provided by aspartate 267 and asparagine 415.

Belongs to the malic enzymes family. As to quaternary structure, homotetramer. The cofactor is Mg(2+). Requires Mn(2+) as cofactor.

The catalysed reaction is (S)-malate + NAD(+) = pyruvate + CO2 + NADH. The enzyme catalyses oxaloacetate + H(+) = pyruvate + CO2. This chain is NAD-dependent malic enzyme, found in Shewanella baltica (strain OS155 / ATCC BAA-1091).